The following is a 276-amino-acid chain: Large ribosomal subunit protein uL2 (276 aa).

Positions 226–276 (MNSVDHPHGGGEGKTSGGRHPVSPWGTPTKGYKTRSNKRTDKLILRHRNKG) are disordered.

Belongs to the universal ribosomal protein uL2 family. Part of the 50S ribosomal subunit. Forms a bridge to the 30S subunit in the 70S ribosome.

Its function is as follows. One of the primary rRNA binding proteins. Required for association of the 30S and 50S subunits to form the 70S ribosome, for tRNA binding and peptide bond formation. It has been suggested to have peptidyltransferase activity; this is somewhat controversial. Makes several contacts with the 16S rRNA in the 70S ribosome. This is Large ribosomal subunit protein uL2 from Vesicomyosocius okutanii subsp. Calyptogena okutanii (strain HA).